Here is a 927-residue protein sequence, read N- to C-terminus: Sodium/calcium exchanger 3 (927 aa).

Positions 1–30 are cleaved as a signal peptide; that stretch reads MAWLRLQPLTSAFLHFGLVTFVLFLNGLRA. Topologically, residues 31–73 are extracellular; it reads EAGDLRDVPSAGQNNESCSGSSDCKEGVILPIWYPENPSLGDK. Asparagine 45 is a glycosylation site (N-linked (GlcNAc...) asparagine). The chain crosses the membrane as a helical span at residues 74–94; it reads IARVIVYFVALIYMFLGVSII. Over 95–147 the chain is Cytoplasmic; that stretch reads ADRFMASIEVITSQEREVTIKKPNGETSTTTIRVWNETVSNLTLMALGSSAPE. One copy of the Alpha-1 repeat lies at 140 to 180; it reads ALGSSAPEILLSLIEVCGHGFIAGDLGPSTIVGSAAFNMFI. A helical membrane pass occupies residues 148–168; it reads ILLSLIEVCGHGFIAGDLGPS. A topological domain (extracellular) is located at residue threonine 169. Residues 170-190 traverse the membrane as a helical segment; it reads IVGSAAFNMFIIIGICVYVIP. Residues 191–202 are Cytoplasmic-facing; sequence DGETRKIKHLRV. A helical membrane pass occupies residues 203-223; that stretch reads FFVTAAWSVFAYIWLYMILAV. The Extracellular segment spans residues 224–230; the sequence is FSPGVVQ. The chain crosses the membrane as a helical span at residues 231–251; it reads VWEGLLTLFFFPVCVLLAWVA. Residues 252–726 lie on the Cytoplasmic side of the membrane; sequence DKRLLFYKYM…DESGEERLPS (475 aa). Positions 253–272 are putative calmodulin-binding region; sequence KRLLFYKYMHKRYRTDKHRG. 2 Calx-beta domains span residues 386–485 and 519–619; these read VHTD…VRLS and ATVT…IALG. 15 residues coordinate Ca(2+): glutamate 409, aspartate 445, aspartate 470, aspartate 471, isoleucine 473, glutamate 475, glutamate 478, aspartate 525, aspartate 526, aspartate 527, glutamate 543, aspartate 579, glutamate 606, glutamate 607, and glutamate 672. Residues 727 to 747 traverse the membrane as a helical segment; the sequence is CFDYVMHFLTVFWKVLFACVP. Topologically, residues 748 to 754 are extracellular; that stretch reads PTEYCHG. A helical transmembrane segment spans residues 755-775; that stretch reads WACFVVSILIIGMLTAIIGDL. At 776–778 the chain is on the cytoplasmic side; sequence ASH. A helical transmembrane segment spans residues 779–799; the sequence is FGCTIGLKDSVTAVVFVAFGT. Residues 796–832 form an Alpha-2 repeat; that stretch reads AFGTSVPDTFASKAAALQDVYADASIGNVTGSNAVNV. The Extracellular portion of the chain corresponds to 800–828; it reads SVPDTFASKAAALQDVYADASIGNVTGSN. Asparagine 823 carries N-linked (GlcNAc...) asparagine glycosylation. Residues 829 to 849 form a helical membrane-spanning segment; the sequence is AVNVFLGIGLAWSVAAIYWAM. The Cytoplasmic segment spans residues 850-860; that stretch reads QGQEFHVSAGT. A helical transmembrane segment spans residues 861–881; sequence LAFSVTLFTIFAFVCLSVLLY. At 882 to 903 the chain is on the extracellular side; sequence RRRPHLGGELGGPRGCKLATTW. A helical transmembrane segment spans residues 904-924; it reads LFVSLWLLYVLFATLEAYCYI. Residues 925-927 lie on the Cytoplasmic side of the membrane; sequence KGF.

This sequence belongs to the Ca(2+):cation antiporter (CaCA) (TC 2.A.19) family. SLC8 subfamily. As to quaternary structure, interacts with AKAP1. Detected in neurons in brain cortex and hippocampus. Detected in pyramidal cell bodies and processes, in granule cells and interneurons in the CA1 and CA3 region of the hippocampus. Detected on astrocyte processes in brain cortex. Detected on endothelial cells in hippocampus capillaries (at protein level). Restricted to brain and skeletal muscle.

It is found in the cell membrane. It localises to the perikaryon. The protein resides in the cell projection. The protein localises to the dendrite. Its subcellular location is the dendritic spine. It is found in the sarcolemma. It localises to the cytoplasm. The protein resides in the sarcoplasm. The protein localises to the cell junction. Its subcellular location is the mitochondrion outer membrane. It is found in the endoplasmic reticulum membrane. It localises to the perinuclear region. It carries out the reaction Ca(2+)(in) + 3 Na(+)(out) = Ca(2+)(out) + 3 Na(+)(in). With respect to regulation, calcium transport is down-regulated by Na(+) and stimulated by Ca(2+). Mediates the electrogenic exchange of Ca(2+) against Na(+) ions across the cell membrane, and thereby contributes to the regulation of cytoplasmic Ca(2+) levels and Ca(2+)-dependent cellular processes. Contributes to cellular Ca(2+) homeostasis in excitable cells, both in muscle and in brain. In a first phase, voltage-gated channels mediate the rapid increase of cytoplasmic Ca(2+) levels due to release of Ca(2+) stores from the endoplasmic reticulum. SLC8A3 mediates the export of Ca(2+) from the cell during the next phase, so that cytoplasmic Ca(2+) levels rapidly return to baseline. Contributes to Ca(2+) transport during excitation-contraction coupling in muscle. In neurons, contributes to the rapid decrease of cytoplasmic Ca(2+) levels back to baseline after neuronal activation, and thereby contributes to modulate synaptic plasticity, learning and memory. Required for normal oligodendrocyte differentiation and for normal myelination. Mediates Ca(2+) efflux from mitochondria and contributes to mitochondrial Ca(2+) ion homeostasis. In Rattus norvegicus (Rat), this protein is Sodium/calcium exchanger 3 (Slc8a3).